A 509-amino-acid polypeptide reads, in one-letter code: Lysine--tRNA ligase (509 aa).

Glu-419 and Glu-426 together coordinate Mg(2+).

The protein belongs to the class-II aminoacyl-tRNA synthetase family. As to quaternary structure, homodimer. Mg(2+) is required as a cofactor.

It is found in the cytoplasm. It catalyses the reaction tRNA(Lys) + L-lysine + ATP = L-lysyl-tRNA(Lys) + AMP + diphosphate. In Methylobacillus flagellatus (strain ATCC 51484 / DSM 6875 / VKM B-1610 / KT), this protein is Lysine--tRNA ligase.